The chain runs to 261 residues: Phosphoinositide-3-kinase-interacting protein 1 (261 aa).

A signal peptide spans 1 to 21; the sequence is MLLAWVRTILVSNMLLAEAYG. Over 22 to 166 the chain is Extracellular; it reads SGGCFWDNGH…NSKEKKDLGT (145 aa). In terms of domain architecture, Kringle spans 24 to 101; sequence GCFWDNGHLY…EKRPCQDLRC (78 aa). 3 disulfides stabilise this stretch: Cys25-Cys101, Cys46-Cys82, and Cys70-Cys96. Basic and acidic residues predominate over residues 90 to 101; it reads APEKRPCQDLRC. Residues 90 to 122 are disordered; that stretch reads APEKRPCQDLRCPDTTSQGLPTSATETEEAAEV. A helical transmembrane segment spans residues 167 to 187; sequence LGYVLGITMMVIIVVIGAGIV. The Cytoplasmic segment spans residues 188 to 261; the sequence is LGYTYKRGKD…LMGQAGTPGA (74 aa).

It localises to the cell membrane. Functionally, negative regulator of hepatic phosphatidylinositol 3-kinase (PI3K) activity. The sequence is that of Phosphoinositide-3-kinase-interacting protein 1 (PIK3IP1) from Bos taurus (Bovine).